Reading from the N-terminus, the 91-residue chain is Small ribosomal subunit protein uS19 (91 aa).

The protein belongs to the universal ribosomal protein uS19 family.

Its function is as follows. Protein S19 forms a complex with S13 that binds strongly to the 16S ribosomal RNA. The polypeptide is Small ribosomal subunit protein uS19 (Lactiplantibacillus plantarum (strain ATCC BAA-793 / NCIMB 8826 / WCFS1) (Lactobacillus plantarum)).